Reading from the N-terminus, the 209-residue chain is Molybdenum cofactor guanylyltransferase (209 aa).

Residues 16-18 (LAG), Lys28, Asn56, Asp69, and Asp103 contribute to the GTP site. Asp103 is a Mg(2+) binding site.

It belongs to the MobA family. In terms of assembly, monomer. It depends on Mg(2+) as a cofactor.

Its subcellular location is the cytoplasm. It catalyses the reaction Mo-molybdopterin + GTP + H(+) = Mo-molybdopterin guanine dinucleotide + diphosphate. Transfers a GMP moiety from GTP to Mo-molybdopterin (Mo-MPT) cofactor (Moco or molybdenum cofactor) to form Mo-molybdopterin guanine dinucleotide (Mo-MGD) cofactor. The protein is Molybdenum cofactor guanylyltransferase of Rhizobium johnstonii (strain DSM 114642 / LMG 32736 / 3841) (Rhizobium leguminosarum bv. viciae).